The chain runs to 197 residues: Xanthine phosphoribosyltransferase (197 aa).

Residues Leu20 and Asn27 each coordinate xanthine. Ala128 to Ala132 serves as a coordination point for 5-phospho-alpha-D-ribose 1-diphosphate. Lys156 serves as a coordination point for xanthine.

It belongs to the purine/pyrimidine phosphoribosyltransferase family. Xpt subfamily. Homodimer.

The protein localises to the cytoplasm. The enzyme catalyses XMP + diphosphate = xanthine + 5-phospho-alpha-D-ribose 1-diphosphate. Its pathway is purine metabolism; XMP biosynthesis via salvage pathway; XMP from xanthine: step 1/1. Converts the preformed base xanthine, a product of nucleic acid breakdown, to xanthosine 5'-monophosphate (XMP), so it can be reused for RNA or DNA synthesis. This is Xanthine phosphoribosyltransferase from Bacillus cytotoxicus (strain DSM 22905 / CIP 110041 / 391-98 / NVH 391-98).